Consider the following 342-residue polypeptide: MKIRENIENFERIKLNKVAKFSDESVGRERLEEPDEIRTCFMVDRDRIIHSKSFRRLKRKTQVFIRTYGDHYRTRLVHTLEVSQVARTIGVALSLNEYLIEAIALGHDLGHAAFAHIGEDVLNDFLPGGFKHNEQSVRVAKKIEKNGLGLNLTKEVLDGILNHSGFSNVSKVAGTFEGQVVRFADKIAYVNHDIDDSIRAGILKEDDLPKNIIEILGASGSERIDTLVKDCVFNTIDNIDKGEPRVSLSKEIGDAFVQLRKFLFDNIYLGKYLEDERKKAEFVLEKVIEYYYNNWEEMPDLYRNICEEEGIHRGVTDYVAGMTDDYCTNEFNKIYIPKFVMY.

One can recognise an HD domain in the interval 75–190 (RLVHTLEVSQ…VRFADKIAYV (116 aa)).

The protein belongs to the dGTPase family. Type 2 subfamily.

This chain is Deoxyguanosinetriphosphate triphosphohydrolase-like protein, found in Clostridium perfringens (strain 13 / Type A).